Consider the following 383-residue polypeptide: Probable aspartate/prephenate aminotransferase (383 aa).

L-aspartate is bound by residues glycine 39, tryptophan 125, and asparagine 175. Lysine 234 carries the N6-(pyridoxal phosphate)lysine modification. Arginine 361 lines the L-aspartate pocket.

Belongs to the class-I pyridoxal-phosphate-dependent aminotransferase family. As to quaternary structure, homodimer. Pyridoxal 5'-phosphate serves as cofactor.

The protein resides in the cytoplasm. It carries out the reaction L-aspartate + 2-oxoglutarate = oxaloacetate + L-glutamate. The catalysed reaction is L-arogenate + oxaloacetate = prephenate + L-aspartate. Catalyzes the reversible conversion of aspartate and 2-oxoglutarate to glutamate and oxaloacetate. Can also transaminate prephenate in the presence of aspartate. This chain is Probable aspartate/prephenate aminotransferase (aspC), found in Thermus aquaticus.